We begin with the raw amino-acid sequence, 948 residues long: Putative JmjC domain-containing histone demethylation protein 1 (948 aa).

The JmjC domain maps to 243 to 402 (VSTTKLAYYV…PQLSIYNLEL (160 aa)). Thr294 is a binding site for substrate. Positions 297 and 299 each coordinate Fe cation. Lys314 contacts substrate.

Belongs to the JHDM1 histone demethylase family. Requires Fe(2+) as cofactor.

It localises to the nucleus. The enzyme catalyses N(6),N(6)-dimethyl-L-lysyl(36)-[histone H3] + 2 2-oxoglutarate + 2 O2 = L-lysyl(36)-[histone H3] + 2 formaldehyde + 2 succinate + 2 CO2. Its function is as follows. May be a histone demethylase that specifically demethylates 'Lys-36' of histone H3, thereby playing a central role in histone code. Represses transcriptional silencing by negatively affecting heterochromatin stability. This chain is Putative JmjC domain-containing histone demethylation protein 1 (jhd1), found in Schizosaccharomyces pombe (strain 972 / ATCC 24843) (Fission yeast).